We begin with the raw amino-acid sequence, 689 residues long: Glycine--tRNA ligase beta subunit (689 aa).

It belongs to the class-II aminoacyl-tRNA synthetase family. Tetramer of two alpha and two beta subunits.

The protein localises to the cytoplasm. It catalyses the reaction tRNA(Gly) + glycine + ATP = glycyl-tRNA(Gly) + AMP + diphosphate. The sequence is that of Glycine--tRNA ligase beta subunit from Oenococcus oeni (strain ATCC BAA-331 / PSU-1).